The primary structure comprises 361 residues: MALLEIKNVVKRFGDYTAVNDVSLSVEAGEFFTLPGPSGCGKTTLLRMLAGFEQPDAGQILLDGQDMSQVAPEKRPVHTVFQSYALFPHMTVRENIAFPLKMAKWDKRKIAAQVDELLEDVRLTQFGDRYPHEMSGGQRQRVAIARALVDRPRLLLLDEPLSALDAKLREEMQIELINLQKEVGITFVYVTHDQGEALALSHRIAVMSHGKVEQLDAPEKLYSYPKNRFVADFLGQCNVLEGTVKALHGDAMTVALKGCGDVKCQAVAGVKEGQQGWLALRPEKVKLDKELPELPDEAYFKGRVHDCLYLGDVTLYVVEVADGVLVEAMQPNNIPGVAKFFDDGDVVEIAWRFDAGSFLTE.

The region spanning 4–234 (LEIKNVVKRF…PKNRFVADFL (231 aa)) is the ABC transporter domain. 36–43 (GPSGCGKT) is an ATP binding site.

Belongs to the ABC transporter superfamily. Spermidine/putrescine importer (TC 3.A.1.11.1) family. The complex is composed of two ATP-binding proteins (PotA), two transmembrane proteins (PotB and PotC) and a solute-binding protein (PotD).

The protein resides in the cell inner membrane. The enzyme catalyses ATP + H2O + polyamine-[polyamine-binding protein]Side 1 = ADP + phosphate + polyamineSide 2 + [polyamine-binding protein]Side 1.. Functionally, part of the ABC transporter complex PotABCD involved in spermidine/putrescine import. Responsible for energy coupling to the transport system. This is Spermidine/putrescine import ATP-binding protein PotA from Chromobacterium violaceum (strain ATCC 12472 / DSM 30191 / JCM 1249 / CCUG 213 / NBRC 12614 / NCIMB 9131 / NCTC 9757 / MK).